Here is a 472-residue protein sequence, read N- to C-terminus: 2-methylcitrate synthase, mitochondrial (472 aa).

A mitochondrion-targeting transit peptide spans 1-29; it reads MALNLTTSRRALGSLKPLTRAAFVGARGY. Positions 75 and 193 each coordinate CoA. Histidine 271 is an oxaloacetate binding site. Leucine 306 serves as a coordination point for CoA. Histidine 307 is an active-site residue. Positions 348, 350, and 351 each coordinate CoA. 2 residues coordinate oxaloacetate: histidine 353 and arginine 362. Histidine 353 is a catalytic residue. The CoA site is built by threonine 402, lysine 403, and asparagine 408. Aspartate 410 is a catalytic residue. 2 residues coordinate oxaloacetate: arginine 436 and arginine 456.

Belongs to the citrate synthase family. In terms of assembly, homodimer.

The protein localises to the mitochondrion matrix. It catalyses the reaction propanoyl-CoA + oxaloacetate + H2O = (2S,3S)-2-methylcitrate + CoA + H(+). It carries out the reaction oxaloacetate + acetyl-CoA + H2O = citrate + CoA + H(+). It functions in the pathway organic acid metabolism; propanoate degradation. In terms of biological role, component of the methylcitrate cycle that catalyzes the synthesis of (2S,3S)-2-methylcitrate from propionyl-CoA and oxaloacetate. Plays an important role in detoxification of propionyl-CoA, an inhibitor of both primary and secondary metabolism. Also has citrate synthase activity using as substrates acetyl-CoA and oxaloacetate. The polypeptide is 2-methylcitrate synthase, mitochondrial (Fusarium solani (Filamentous fungus)).